A 150-amino-acid chain; its full sequence is D-galactose-binding lectin (150 aa).

The D-galactose site is built by His16 and Gly19. N-linked (GlcNAc...) asparagine glycosylation is present at Asn26. D-galactose contacts are provided by residues 35 to 37 (DIH), His64, and Gly67. A glycan (N-linked (GlcNAc...) asparagine) is linked at Asn74. D-galactose contacts are provided by residues 83 to 85 (DRH), His108, and Gly111. A glycan (N-linked (GlcNAc...) asparagine) is linked at Asn118. 127–129 (DEH) lines the D-galactose pocket.

In terms of assembly, oligomerizes in solution. Post-translationally, the N-terminus is blocked. Expressed in mantle. Expressed 51 and 1.6 fold in mantle and gonads, respectively, relative to that in hemocytes. Expressed at a much lower level in other tissues tested including gill, muscle and hepatopancreas.

Hemagglutinating activity does not require Ca(2+) ions. Hemagglutinating activity is inhibited by porcine stomach mucin (PSM), bovine submaxillary mucin (BSM) and fetuin. Agglutination of V.proteolyticus bacteria is inhibited by D-galactose, but not by D-glucose. Fungal binding is inhibited by D-galactose, but not by pathogen-associated molecular patterns (PAMPs) including lipopolysaccharide (LPS), peptidoglycan and beta-glucan. D-galactose-binding lectin. Binds both alpha and beta anomer of galactose (Gal). Binds strongly to branched beta-Gal-terminated glycans and weakly to unbranched glycans with alpha-Gal on the end of chains. Has strong affinity for both Gal and GalNAc. Binds glycoproteins containing mucin-type chains. Has hemagglutinating activity towards human group A erythrocytes. Has hemagglutinating activity towards rabbit erythrocytes. Agglutinates V.proteolyticus bacteria. Binds strongly to fungi including species from genera Aspergillus, Alternaria, Fusarium and Haematonectria, and to a lesser extent to fungi from genera Trichoderma. Decreases conidia germination and hyphal growth of fungi. At high concentration, stimulates secretion of cytokines TNF-alpha and IFN-gamma from human peripheral blood cells, and at low concentration reduces hyperexpression of cytokine IL-10 in these cells, indicative of immunomodulatory capability. However, has no effect on IL-4 production. Recognizes pathogen-associated molecular patterns (PAMPs) and binds to peptidoglycan from S.aureus, but has only little binding to beta-1,3-glucan from E.gracilis and lipopolysaccharide (LPS) from E.coli. May be involved in innate immunity acting as an antibacterial or antifungal agent recognizing carbohydrate ligands on the surface of pathogens. In Mytilus trossulus (Blue mussel), this protein is D-galactose-binding lectin.